Reading from the N-terminus, the 342-residue chain is Trans-3-hydroxy-L-proline dehydratase (342 aa).

Catalysis depends on S90, which acts as the Proton acceptor. Substrate contacts are provided by residues 91 to 92, D252, and 257 to 258; these read GS and GT.

This sequence belongs to the proline racemase family.

The catalysed reaction is trans-3-hydroxy-L-proline = 1-pyrroline-2-carboxylate + H2O. Catalyzes the dehydration of trans-3-hydroxy-L-proline (t3LHyp) to Delta(1)-pyrroline-2-carboxylate (Pyr2C). Is likely involved in a degradation pathway that converts t3LHyp to L-proline. Displays neither proline racemase activity nor 4-hydroxyproline 2-epimerase activity. This Allorhizobium ampelinum (strain ATCC BAA-846 / DSM 112012 / S4) (Agrobacterium vitis (strain S4)) protein is Trans-3-hydroxy-L-proline dehydratase.